A 409-amino-acid chain; its full sequence is Putative competence-damage inducible protein (409 aa).

It belongs to the CinA family.

The sequence is that of Putative competence-damage inducible protein from Clostridium botulinum (strain Langeland / NCTC 10281 / Type F).